Consider the following 239-residue polypeptide: Phosphoribosylaminoimidazole-succinocarboxamide synthase (239 aa).

The protein belongs to the SAICAR synthetase family.

It carries out the reaction 5-amino-1-(5-phospho-D-ribosyl)imidazole-4-carboxylate + L-aspartate + ATP = (2S)-2-[5-amino-1-(5-phospho-beta-D-ribosyl)imidazole-4-carboxamido]succinate + ADP + phosphate + 2 H(+). Its pathway is purine metabolism; IMP biosynthesis via de novo pathway; 5-amino-1-(5-phospho-D-ribosyl)imidazole-4-carboxamide from 5-amino-1-(5-phospho-D-ribosyl)imidazole-4-carboxylate: step 1/2. This is Phosphoribosylaminoimidazole-succinocarboxamide synthase from Nitratiruptor sp. (strain SB155-2).